The primary structure comprises 472 residues: MQNQGQDKYQQAFADLEPLSSTDGSFLGSSLQAQQQREHMRTKVLQDLDKVNLRLKSAKTKVSVRESNGSLQLRATLPIKPGDKDTNGTGRKQYNLSLNIPANLDGLKTAEEEAYELGKLIARKTFEWNDKYLGKEATKKDSQTIGDLLEKFAEEYFKTHKRTTKSEHTFFYYFSRTQRYTNSKDLATAENLINSIEQIDKEWARYNAARAISAFCITFNIEIDLSQYSKMPDRNSRNIPTDAEILSGITKFEDYLVTRGNQVNEDVKDSWQLWRWTYGMLAVFGLRPREIFINPNIDWWLSKENIDLTWKVDKECKTGERQALPLHKEWIDEFDLRNPKYLEMLATAISKKDKTNHAEITALTQRISWWFRKVELDFKPYDLRHAWAIRAHILGIPIKAAADNLGHSMQVHTQTYQRWFSLDMRKLAINQALTKRNEFEVIREENAKLQIENERLRMEIEKLKMEIAYKNS.

A Tyr recombinase domain is found at 244 to 429; sequence EILSGITKFE…FSLDMRKLAI (186 aa). Active-site residues include R287, K317, R384, and H407. The O-(3'-phospho-DNA)-tyrosine intermediate role is filled by Y416.

It belongs to the XisA/XisC recombinase family.

In terms of biological role, essential for DNA excision. Site specific recombinase necessary for the excision of the 11 kb nifD element during heterocyst differentiation. The polypeptide is Excisase A (xisA) (Nostoc sp. (strain PCC 7120 / SAG 25.82 / UTEX 2576)).